A 302-amino-acid chain; its full sequence is Dioxygenase ALT11 (302 aa).

The tract at residues 1-22 is disordered; it reads MSSPELPSQMGVPNGHTKLQEV. The Fe cation site is built by His147, Asp149, and His223.

It belongs to the PhyH family. As to quaternary structure, homodimer. Fe cation serves as cofactor.

The protein operates within mycotoxin biosynthesis. Its function is as follows. Dioxygenase; part of the gene cluster that mediates the biosynthesis of the host-selective toxins (HSTs) AAL-toxins, sphinganine-analog mycotoxins responsible for Alternaria stem canker on tomato by the tomato pathotype. The biosynthesis starts with the polyketide synthase ALT1-catalyzed C-16 carbon chain assembly from one starter acetyl-CoA unit with malonyl-CoA extender units. ALT1 also selectively transfers methyl groups at the first and the third cycle of chain elongation for AAL toxin. The C-16 polyketide chain is released from the enzyme by a nucleophilic attack of a carbanion, which is derived from R-carbon of glycin by decarboxylation, on the carbonyl carbon of polyketide acyl chain. This step is probably catalyzed by a pyridoxal 5'-phosphate-dependent aminoacyl transferase ALT4. The respective functions of the other enzymes encoded by the cluster have still to be elucidated. The sphingosine N-acyltransferase-like protein ALT7 seems not to act as a resistance/self-tolerance factor against the toxin in the toxin biosynthetic gene cluster, contrary to what is expected. The polypeptide is Dioxygenase ALT11 (Alternaria alternata (Alternaria rot fungus)).